Consider the following 882-residue polypeptide: Putative HTH-type transcriptional regulator Mb0914c (882 aa).

Residues 814–879 enclose the HTH luxR-type domain; it reads PARGWGSLTP…QLVDEAARRG (66 aa). The segment at residues 838 to 857 is a DNA-binding region (H-T-H motif); that stretch reads NKDIAKRLFVSPRTVQTHLT.

The chain is Putative HTH-type transcriptional regulator Mb0914c from Mycobacterium bovis (strain ATCC BAA-935 / AF2122/97).